The sequence spans 194 residues: dCTP deaminase (194 aa).

DCTP-binding positions include 110-115 (RSSLAR), aspartate 128, 136-138 (VLE), tyrosine 171, lysine 178, and glutamine 182. Glutamate 138 acts as the Proton donor/acceptor in catalysis.

This sequence belongs to the dCTP deaminase family. In terms of assembly, homotrimer.

It carries out the reaction dCTP + H2O + H(+) = dUTP + NH4(+). It functions in the pathway pyrimidine metabolism; dUMP biosynthesis; dUMP from dCTP (dUTP route): step 1/2. In terms of biological role, catalyzes the deamination of dCTP to dUTP. The protein is dCTP deaminase of Pasteurella multocida (strain Pm70).